Consider the following 312-residue polypeptide: DNA-directed RNA polymerase subunit alpha (312 aa).

The segment at 1 to 229 (MLQYQIDRVD…ALFQPLATVT (229 aa)) is alpha N-terminal domain (alpha-NTD). An alpha C-terminal domain (alpha-CTD) region spans residues 241 to 312 (SAESQIPLEE…ISLPQSRTTA (72 aa)).

It belongs to the RNA polymerase alpha chain family. In terms of assembly, in cyanobacteria the RNAP catalytic core is composed of 2 alpha, 1 beta, 1 beta', 1 gamma and 1 omega subunit. When a sigma factor is associated with the core the holoenzyme is formed, which can initiate transcription.

It carries out the reaction RNA(n) + a ribonucleoside 5'-triphosphate = RNA(n+1) + diphosphate. In terms of biological role, DNA-dependent RNA polymerase catalyzes the transcription of DNA into RNA using the four ribonucleoside triphosphates as substrates. The protein is DNA-directed RNA polymerase subunit alpha of Synechococcus sp. (strain RCC307).